Here is a 99-residue protein sequence, read N- to C-terminus: MSPISRDEVLHLARLTRLVLTDTELASFSSQLDVILAHVSQIQAVDVTGVEPTDNPLKYVNITRPDETVPCLTQQQALAEAPEAIYGRFVVPQILGDNK.

This sequence belongs to the GatC family. As to quaternary structure, heterotrimer of A, B and C subunits.

It catalyses the reaction L-glutamyl-tRNA(Gln) + L-glutamine + ATP + H2O = L-glutaminyl-tRNA(Gln) + L-glutamate + ADP + phosphate + H(+). The catalysed reaction is L-aspartyl-tRNA(Asn) + L-glutamine + ATP + H2O = L-asparaginyl-tRNA(Asn) + L-glutamate + ADP + phosphate + 2 H(+). In terms of biological role, allows the formation of correctly charged Asn-tRNA(Asn) or Gln-tRNA(Gln) through the transamidation of misacylated Asp-tRNA(Asn) or Glu-tRNA(Gln) in organisms which lack either or both of asparaginyl-tRNA or glutaminyl-tRNA synthetases. The reaction takes place in the presence of glutamine and ATP through an activated phospho-Asp-tRNA(Asn) or phospho-Glu-tRNA(Gln). The chain is Aspartyl/glutamyl-tRNA(Asn/Gln) amidotransferase subunit C from Mycobacterium leprae (strain Br4923).